We begin with the raw amino-acid sequence, 496 residues long: Glutamyl-tRNA(Gln) amidotransferase subunit A (496 aa).

Active-site charge relay system residues include lysine 75 and serine 150. Serine 174 serves as the catalytic Acyl-ester intermediate.

It belongs to the amidase family. GatA subfamily. Heterotrimer of A, B and C subunits.

The catalysed reaction is L-glutamyl-tRNA(Gln) + L-glutamine + ATP + H2O = L-glutaminyl-tRNA(Gln) + L-glutamate + ADP + phosphate + H(+). Functionally, allows the formation of correctly charged Gln-tRNA(Gln) through the transamidation of misacylated Glu-tRNA(Gln) in organisms which lack glutaminyl-tRNA synthetase. The reaction takes place in the presence of glutamine and ATP through an activated gamma-phospho-Glu-tRNA(Gln). This chain is Glutamyl-tRNA(Gln) amidotransferase subunit A, found in Burkholderia pseudomallei (strain 668).